The following is a 553-amino-acid chain: Zinc finger protein 426 (553 aa).

One can recognise a KRAB domain in the interval V40–Q111. C2H2-type zinc fingers lie at residues F222–H244, H277–H299, Y305–H327, Y333–H355, Y361–H383, F389–H411, C417–H439, Y445–H467, Y473–H495, Y501–H525, and Y531–H553.

Its subcellular location is the nucleus. In terms of biological role, may be involved in transcriptional regulation. The chain is Zinc finger protein 426 (Znf426) from Rattus norvegicus (Rat).